The following is a 105-amino-acid chain: Putative toxin MazF8 (105 aa).

As to quaternary structure, forms a complex with cognate antitoxin MazE8.

In terms of biological role, putative toxic component of a type II toxin-antitoxin (TA) system. Acts as an endoribonuclease. Neutralized by coexpression with cognate antitoxin MazE8. The sequence is that of Putative toxin MazF8 (mazF8) from Mycobacterium tuberculosis (strain CDC 1551 / Oshkosh).